We begin with the raw amino-acid sequence, 109 residues long: Small ribosomal subunit protein eS25z (109 aa).

Residues 1–36 are disordered; that stretch reads MAPKKDKVPPPSSKPAKSGGGKQKKKKWSKGKQKEK. Positions 22 to 31 are enriched in basic residues; that stretch reads KQKKKKWSKG.

Belongs to the eukaryotic ribosomal protein eS25 family.

The chain is Small ribosomal subunit protein eS25z (RPS25A) from Arabidopsis thaliana (Mouse-ear cress).